The following is a 662-amino-acid chain: Methyl-accepting chemotaxis protein TlpB (662 aa).

The Cytoplasmic portion of the chain corresponds to M1–P16. The helical transmembrane segment at L17–Y37 threads the bilayer. The Extracellular portion of the chain corresponds to Q38 to N281. The region spanning S153–W228 is the Cache domain. Residues T282–I302 form a helical membrane-spanning segment. Positions R303–G355 constitute an HAMP domain. Over R303 to S662 the chain is Cytoplasmic. The residue at position 370 (E370) is a Glutamate methyl ester (Glu). Residues S374–S610 enclose the Methyl-accepting transducer domain. Q594 carries the glutamate methyl ester (Gln) modification. 2 positions are modified to glutamate methyl ester (Glu): E629 and E636.

Belongs to the methyl-accepting chemotaxis (MCP) protein family.

The protein localises to the cell membrane. Its function is as follows. Chemotactic-signal transducers respond to changes in the concentration of attractants and repellents in the environment, transduce a signal from the outside to the inside of the cell, and facilitate sensory adaptation through the variation of the level of methylation. All amino acids serve as attractants in B.subtilis, they appear to cause an increase in the turnover methyl groups, leading to methylation of an unidentified acceptor, while repellents have been shown to cause a decrease in methyl group turnover. The methyl groups are added by a methyltransferase and removed by a methylesterase. The polypeptide is Methyl-accepting chemotaxis protein TlpB (tlpB) (Bacillus subtilis (strain 168)).